A 780-amino-acid chain; its full sequence is Zinc finger and SCAN domain-containing protein 10 (780 aa).

The disordered stretch occupies residues 1-38 (MLGESVPAAVEQEQLGEVKLEEEEAVSPEDPRRPESRL). Over residues 29–38 (EDPRRPESRL) the composition is skewed to basic and acidic residues. The region spanning 56-126 (MGPRASLSRL…LLLEGIHREP (71 aa)) is the SCAN box domain. Disordered regions lie at residues 153-237 (GCAS…SRDQ) and 255-324 (KAWP…GSLL). Residues serine 162 and serine 208 each carry the phosphoserine modification. The span at 202–224 (SSKQPLSPGPQKTFQALQESSPQ) shows a compositional bias: polar residues. The residue at position 268 (threonine 268) is a Phosphothreonine. Residues 268–280 (TPDKEEFKQEEPK) are compositionally biased toward basic and acidic residues. C2H2-type zinc fingers lie at residues 347 to 370 (FICADCGVSFPQLSRLKAHQLRSH), 376 to 398 (FLCLCCGKSFGRSSILKLHMRTH), 404 to 426 (HACHLCGHRFRQSSHLSKHLLTH), 432 to 454 (FLCAECGRGFQRRASLVQHLLAH), 476 to 498 (VLCSHCGQSFQRRSSLKRHLRIH), 522 to 544 (FVCSDCGKAFRRSEHLVAHRRVH), 550 to 572 (FSCQACGRSFTQSSQLVSHQRVH), 578 to 600 (YACPQCGKRFVRRASLARHLLTH), 606 to 628 (HHCTQCGKSFGQTQDLARHQRSH), 634 to 656 (CRCSECGEGFSQSAHLARHQRIH), 662 to 684 (HACDTCGHRFRNSSNLARHRRSH), 690 to 712 (YSCQTCGRSFRRNAHLRRHLATH), 724 to 746 (QECVECGKSFSRSCNLLRHLLVH), and 752 to 774 (YSCTQCGRSFSRNSHLLRHLRTH). An N5-methylglutamine modification is found at glutamine 483. The tract at residues 492–520 (KRHLRIHARDKDRRSSEGSGSRRRDSDRR) is disordered. A compositionally biased stretch (basic and acidic residues) spans 498–520 (HARDKDRRSSEGSGSRRRDSDRR).

Interacts with POU5F1/OCT4 and SOX2. Methylated at Gln-483 by N6AMT1.

Its subcellular location is the nucleus. Its function is as follows. Embryonic stem (ES) cell-specific transcription factor required to maintain ES cell pluripotency. Can both activate and /or repress expression of target genes, depending on the context. Specifically binds the 5'-[GA]CGCNNGCG[CT]-3' DNA consensus sequence. Regulates expression of POU5F1/OCT4, ZSCAN4 and ALYREF/THOC4. This Homo sapiens (Human) protein is Zinc finger and SCAN domain-containing protein 10 (ZSCAN10).